Consider the following 471-residue polypeptide: Soluble pyridine nucleotide transhydrogenase (471 aa).

41–50 contributes to the FAD binding site; that stretch reads EREPSVGGGC.

Belongs to the class-I pyridine nucleotide-disulfide oxidoreductase family. It depends on FAD as a cofactor.

It is found in the cytoplasm. The catalysed reaction is NAD(+) + NADPH = NADH + NADP(+). Its function is as follows. Conversion of NADPH, generated by peripheral catabolic pathways, to NADH, which can enter the respiratory chain for energy generation. The protein is Soluble pyridine nucleotide transhydrogenase of Aliivibrio fischeri (strain ATCC 700601 / ES114) (Vibrio fischeri).